Here is a 134-residue protein sequence, read N- to C-terminus: Small ribosomal subunit protein uS11 (134 aa).

The protein belongs to the universal ribosomal protein uS11 family. As to quaternary structure, part of the 30S ribosomal subunit. Interacts with proteins S7 and S18. Binds to IF-3.

In terms of biological role, located on the platform of the 30S subunit, it bridges several disparate RNA helices of the 16S rRNA. Forms part of the Shine-Dalgarno cleft in the 70S ribosome. The sequence is that of Small ribosomal subunit protein uS11 from Herminiimonas arsenicoxydans.